Here is a 169-residue protein sequence, read N- to C-terminus: Cell division inhibitor SulA (169 aa).

The segment at 106-112 (ALRTGNY) is ftsZ binding. A lon protease binding region spans residues 162–169 (KIHSNLYH).

Belongs to the SulA family. In terms of assembly, interacts with FtsZ. Post-translationally, is rapidly cleaved and degraded by the Lon protease once DNA damage is repaired.

In terms of biological role, component of the SOS system and an inhibitor of cell division. Accumulation of SulA causes rapid cessation of cell division and the appearance of long, non-septate filaments. In the presence of GTP, binds a polymerization-competent form of FtsZ in a 1:1 ratio, thus inhibiting FtsZ polymerization and therefore preventing it from participating in the assembly of the Z ring. This mechanism prevents the premature segregation of damaged DNA to daughter cells during cell division. The sequence is that of Cell division inhibitor SulA from Salmonella arizonae (strain ATCC BAA-731 / CDC346-86 / RSK2980).